Here is a 558-residue protein sequence, read N- to C-terminus: Dihydroxy-acid dehydratase (558 aa).

Cys50 provides a ligand contact to [2Fe-2S] cluster. Residue Asp82 coordinates Mg(2+). Cys123 provides a ligand contact to [2Fe-2S] cluster. Asp124 and Lys125 together coordinate Mg(2+). At Lys125 the chain carries N6-carboxylysine. Position 195 (Cys195) interacts with [2Fe-2S] cluster. Glu447 provides a ligand contact to Mg(2+). Ser472 serves as the catalytic Proton acceptor.

Belongs to the IlvD/Edd family. In terms of assembly, homodimer. The cofactor is [2Fe-2S] cluster. It depends on Mg(2+) as a cofactor.

It catalyses the reaction (2R)-2,3-dihydroxy-3-methylbutanoate = 3-methyl-2-oxobutanoate + H2O. It carries out the reaction (2R,3R)-2,3-dihydroxy-3-methylpentanoate = (S)-3-methyl-2-oxopentanoate + H2O. It participates in amino-acid biosynthesis; L-isoleucine biosynthesis; L-isoleucine from 2-oxobutanoate: step 3/4. Its pathway is amino-acid biosynthesis; L-valine biosynthesis; L-valine from pyruvate: step 3/4. Functionally, functions in the biosynthesis of branched-chain amino acids. Catalyzes the dehydration of (2R,3R)-2,3-dihydroxy-3-methylpentanoate (2,3-dihydroxy-3-methylvalerate) into 2-oxo-3-methylpentanoate (2-oxo-3-methylvalerate) and of (2R)-2,3-dihydroxy-3-methylbutanoate (2,3-dihydroxyisovalerate) into 2-oxo-3-methylbutanoate (2-oxoisovalerate), the penultimate precursor to L-isoleucine and L-valine, respectively. The chain is Dihydroxy-acid dehydratase from Saccharolobus islandicus (strain Y.N.15.51 / Yellowstone #2) (Sulfolobus islandicus).